Here is a 300-residue protein sequence, read N- to C-terminus: Fatty acid elongase 3 (300 aa).

3 helical membrane passes run 31 to 51 (VPAVAVVLYLILVLYVPENVM), 61 to 81 (FLNMLWNLLLTVFSICGAYYC), and 127 to 147 (IFFDGFVGLWVAAFVLSKIPE). The HxxHH motif motif lies at 165–169 (HWYHH). Histidine 168 serves as the catalytic Nucleophile. 4 consecutive transmembrane segments (helical) span residues 170–190 (ATVMLFCWHAYAYTISSGLWF), 192–212 (TMNYCVHSIMYFYYFMCACGM), 219–239 (IAPLITMMQILQMVAGTLIVL), and 261–283 (MGLLMYVSYLFLFSQLYYRSYIS).

The protein belongs to the ELO family.

Its subcellular location is the endoplasmic reticulum membrane. The catalysed reaction is an acyl-CoA + malonyl-CoA + H(+) = a 3-oxoacyl-CoA + CO2 + CoA. It functions in the pathway lipid metabolism; fatty acid biosynthesis. Involved in the synthesis of fatty acids. Elongates C14 fatty acids to C18. Required for the maintenance of the global lipidome profile in this parasite. In Trypanosoma cruzi (strain CL Brener), this protein is Fatty acid elongase 3.